Consider the following 291-residue polypeptide: Phosphate import ATP-binding protein PstB (291 aa).

The 242-residue stretch at 45 to 286 (YSTQNLDLWY…PADKQTEDYI (242 aa)) folds into the ABC transporter domain. 77–84 (GPSGCGKS) contacts ATP.

Belongs to the ABC transporter superfamily. Phosphate importer (TC 3.A.1.7) family. As to quaternary structure, the complex is composed of two ATP-binding proteins (PstB), two transmembrane proteins (PstC and PstA) and a solute-binding protein (PstS).

The protein resides in the cell membrane. The enzyme catalyses phosphate(out) + ATP + H2O = ADP + 2 phosphate(in) + H(+). Functionally, part of the ABC transporter complex PstSACB involved in phosphate import. Responsible for energy coupling to the transport system. The chain is Phosphate import ATP-binding protein PstB from Staphylococcus epidermidis (strain ATCC 35984 / DSM 28319 / BCRC 17069 / CCUG 31568 / BM 3577 / RP62A).